A 589-amino-acid chain; its full sequence is MGAQIILSEGFEVVPPPEMNDLVLFGSNQSVSSCDVSTVTTEDGTVFSGDSSPGGATEEDFPEEKPFSFYFVKQPAYDDPEIKAKIDEAGHEINRYNKDRIVVSNAQESEKAEILSLFGQMKSLVSKSEGYRVVIEEKKMEFDALHESLRNLRCSTSDQLCFSKEELDHLIYIAHYQIEHGSIGFEEEDWVLKETEKADGIVLSEDSLAEKEASINRVKSMAVELNEVKKELDAITWKINHLSDKVGKSQNNLRVLDVKKAHILEERDRSYERIKMLRIQRDKGKAAFYQSLPVMRKARELAASGNVRDLEVFASSEADRFMTQWNDDKAFRDDYVKRISPSLCERQLNQDGRIKDPEVQVVWEKKVPVKGGEKVHETNREDSSSNSSQYGSVITDKRKKETRKKAMDFNRSSAEESDVTDLEFSVYEKPKKEEEEVDEETLKEREREEQLEKARLAMERKRKLQEKAAAKAAIRAQKEAEKKLKECEKKAKKKAAANSSSPSESDHSQEVTKDLEKVRTLAVSGKEKHQKERSLFPKQRSFRYKHRGRGTEALPKAILNRRKAHKYWVWGLSSAALAVALFLVVLLLR.

A coiled-coil region spans residues 205-245; the sequence is EDSLAEKEASINRVKSMAVELNEVKKELDAITWKINHLSDK. Composition is skewed to basic and acidic residues over residues 370 to 383, 395 to 408, 426 to 450, and 504 to 534; these read KGGE…REDS, TDKR…KAMD, VYEK…REEQ, and ESDH…KERS. Disordered stretches follow at residues 370–450 and 485–534; these read KGGE…REEQ and KECE…KERS. A coiled-coil region spans residues 431-500; the sequence is KKEEEEVDEE…AKKKAAANSS (70 aa). Residues 568–588 form a helical membrane-spanning segment; the sequence is WVWGLSSAALAVALFLVVLLL.

Belongs to the plant Proton pump-interactor protein family. As to expression, expressed in seedlings and flowers.

Its subcellular location is the cell membrane. The protein resides in the endoplasmic reticulum membrane. May regulate plasma membrane ATPase activity. This chain is Proton pump-interactor 2 (PPI2), found in Arabidopsis thaliana (Mouse-ear cress).